Reading from the N-terminus, the 584-residue chain is MSLKQQVDLLPNKPGCYLFFNKDNDVIYVGKAKNLKKRVSTYFNKAYNIKTTRLVREITDLKYFIVDNEKESLLLEKNLIKKYHPKYNVLLNDDKTYPYIIITNQKDPMYKYVRKYDKKALKNYGPLPIGSNARSILLTLQRLFPLRMCQGNLNKPCLYYHLNQCSGACFKQVDPSYYEYQIKQVDKFFKGEINQVKQTLVKQMQKASDNLQFEQAQRIKDQITSLDFITAKQNVDIVTNKNIDVVNYEINQDKICFVILFYRLGQLTYKDEYIQNYEGQNLSELFNSYLQQIYQKNIYPDVLLIPNEIELLDLDQNLLEFSSYSLNKQDDVFIKLAKQNAIDSLNKSVISHNVNSGDEIEILEQLKQISNASKYLKRIEVFDISNIYSQFITGACIVYINAKPIRNEFRKYNIDPSYTSDFSRMKFMLEKRFLKQIKEKEQLPDLVIVDGGIIQIHAAKEVLNKLNLKIDVIGLSKDDHHKTRYLIDIFEQTIDIKNFKKLYNFLTSLQIRVDEYAKSGFRKKYHNQLNDQILLIKGVGKKTNLKLYKHFKTIDNIKNASFDELNKVINNKKITNLIISNLNK.

The region spanning 12 to 89 is the GIY-YIG domain; the sequence is NKPGCYLFFN…IKKYHPKYNV (78 aa). The region spanning 194-229 is the UVR domain; that stretch reads NQVKQTLVKQMQKASDNLQFEQAQRIKDQITSLDFI.

It belongs to the UvrC family. As to quaternary structure, interacts with UvrB in an incision complex.

Its subcellular location is the cytoplasm. In terms of biological role, the UvrABC repair system catalyzes the recognition and processing of DNA lesions. UvrC both incises the 5' and 3' sides of the lesion. The N-terminal half is responsible for the 3' incision and the C-terminal half is responsible for the 5' incision. In Mycoplasma mycoides subsp. mycoides SC (strain CCUG 32753 / NCTC 10114 / PG1), this protein is UvrABC system protein C.